The chain runs to 270 residues: Tryptophan synthase alpha chain (270 aa).

Catalysis depends on proton acceptor residues Glu49 and Asp60.

The protein belongs to the TrpA family. Tetramer of two alpha and two beta chains.

It catalyses the reaction (1S,2R)-1-C-(indol-3-yl)glycerol 3-phosphate + L-serine = D-glyceraldehyde 3-phosphate + L-tryptophan + H2O. It functions in the pathway amino-acid biosynthesis; L-tryptophan biosynthesis; L-tryptophan from chorismate: step 5/5. The alpha subunit is responsible for the aldol cleavage of indoleglycerol phosphate to indole and glyceraldehyde 3-phosphate. The sequence is that of Tryptophan synthase alpha chain from Marinobacter nauticus (strain ATCC 700491 / DSM 11845 / VT8) (Marinobacter aquaeolei).